The sequence spans 692 residues: MSAPAQPAPGVDGGDPSQARIRVPAGTTAATAVGEAGLPRRGTPDAIVVVRDADGNLRDLSWVPDVDTDITPVAANTDDGRSVIRHSTAHVLAQAVQELFPQAKLGIGPPITDGFYYDFDVPEPFTPEDLAALEKRMRQIVKEGQLFDRRVYESTEQARAELANEPYKLELVDDKSGDAEIMEVGGDELTAYDNLNPRTRERVWGDLCRGPHIPTTKHIPAFKLTRSSAAYWRGDQKNASLQRIYGTAWESQEALDRHLEFIEEAQRRDHRKLGVELDLFSFPDEIGSGLAVFHPKGGIVRRELEDYSRRKHTEAGYQFVNSPHITKAQLFHTSGHLDWYADGMFPPMHIDAEYNADGSLRKPGQDYYLKPMNCPMHCLIFRARGRSYRELPLRLFEFGTVYRYEKSGVVHGLTRVRGLTMDDAHIFCTRDQMRDELRSLLRFVLDLLADYGLTDFYLELSTKDPEKFVGAEEVWEEATTVLAEVGAESGLELVPDPGGAAFYGPKISVQVKDALGRTWQMSTIQLDFNFPERFGLEYTAADGTRHRPVMIHRALFGSIERFFGILTEHYAGAFPAWLAPVQVVGIPVADEHVAYLEEVATQLKSHGVRAEVDASDDRMAKKIVHHTNHKVPFMVLAGDRDVAAGAVSFRFGDRTQINGVARDDAVAAIVAWIADRENAVPTAELVKVAGRE.

The segment at 1–20 (MSAPAQPAPGVDGGDPSQAR) is disordered. A TGS domain is found at 1 to 74 (MSAPAQPAPG…DVDTDITPVA (74 aa)). Residues 269–575 (DHRKLGVELD…LTEHYAGAFP (307 aa)) are catalytic. Zn(2+) contacts are provided by C374, H425, and H552.

This sequence belongs to the class-II aminoacyl-tRNA synthetase family. In terms of assembly, homodimer. Requires Zn(2+) as cofactor.

It is found in the cytoplasm. It catalyses the reaction tRNA(Thr) + L-threonine + ATP = L-threonyl-tRNA(Thr) + AMP + diphosphate + H(+). Catalyzes the attachment of threonine to tRNA(Thr) in a two-step reaction: L-threonine is first activated by ATP to form Thr-AMP and then transferred to the acceptor end of tRNA(Thr). Also edits incorrectly charged L-seryl-tRNA(Thr). The polypeptide is Threonine--tRNA ligase (Mycobacterium tuberculosis (strain CDC 1551 / Oshkosh)).